The sequence spans 1203 residues: Chromosome partition protein Smc (1203 aa).

Proline 32–asparagine 39 is a binding site for ATP. Coiled-coil stretches lie at residues isoleucine 167 to lysine 203, methionine 250 to glutamine 288, and aspartate 327 to lysine 497. The SMC hinge domain occupies glycine 511 to glycine 622. Coiled coils occupy residues glutamate 657 to glutamate 689, arginine 720 to glutamine 765, and tyrosine 976 to leucine 1030.

The protein belongs to the SMC family. As to quaternary structure, homodimer.

It localises to the cytoplasm. Required for chromosome condensation and partitioning. This is Chromosome partition protein Smc from Mycobacterium leprae (strain TN).